An 80-amino-acid chain; its full sequence is Large ribosomal subunit protein uL24 (80 aa).

This sequence belongs to the universal ribosomal protein uL24 family. Part of the 50S ribosomal subunit.

One of two assembly initiator proteins, it binds directly to the 5'-end of the 23S rRNA, where it nucleates assembly of the 50S subunit. In terms of biological role, one of the proteins that surrounds the polypeptide exit tunnel on the outside of the subunit. The chain is Large ribosomal subunit protein uL24 from Chlorobaculum tepidum (strain ATCC 49652 / DSM 12025 / NBRC 103806 / TLS) (Chlorobium tepidum).